A 230-amino-acid chain; its full sequence is Sugar fermentation stimulation protein homolog (230 aa).

Belongs to the SfsA family.

This chain is Sugar fermentation stimulation protein homolog, found in Ruegeria pomeroyi (strain ATCC 700808 / DSM 15171 / DSS-3) (Silicibacter pomeroyi).